Here is an 833-residue protein sequence, read N- to C-terminus: Probable glucan 1,3-beta-glucosidase D (833 aa).

The span at 1–33 (MPTHSRSRDRYGGRDSDREARYDYDYARRRYAT) shows a compositional bias: basic and acidic residues. A disordered region spans residues 1-228 (MPTHSRSRDR…RKRQKKLAVV (228 aa)). At 1 to 305 (MPTHSRSRDR…GGRPFWKRKR (305 aa)) the chain is on the cytoplasmic side. A compositionally biased stretch (acidic residues) spans 34–45 (DDDDDYDDDELE). Composition is skewed to basic and acidic residues over residues 46–75 (HDLTERRYRRDGYRPPRESRARGYYERDAE) and 97–172 (YGDD…ETAA). Low complexity predominate over residues 183 to 196 (SASHLLSADALAKL). Positions 200-217 (YEKEERRKREIAKDAAKA) are enriched in basic and acidic residues. A helical; Signal-anchor for type II membrane protein transmembrane segment spans residues 306–326 (WIGLGALIIILVIVIPVAVVV). Residues 327-833 (SKKHDNKSDP…PDFGDLPEYY (507 aa)) lie on the Extracellular side of the membrane. The disordered stretch occupies residues 331-353 (DNKSDPADSQGTSPGKSNLDGLS). Residue asparagine 332 is glycosylated (N-linked (GlcNAc...) asparagine). Polar residues predominate over residues 337–346 (ADSQGTSPGK). N-linked (GlcNAc...) asparagine glycosylation is found at asparagine 378, asparagine 383, asparagine 395, asparagine 548, asparagine 560, and asparagine 569. The active-site Proton donor is the glutamate 599. N-linked (GlcNAc...) asparagine glycosylation is found at asparagine 638, asparagine 671, and asparagine 691. Glutamate 704 (nucleophile) is an active-site residue.

Belongs to the glycosyl hydrolase 5 (cellulase A) family.

It localises to the cell membrane. The catalysed reaction is Successive hydrolysis of beta-D-glucose units from the non-reducing ends of (1-&gt;3)-beta-D-glucans, releasing alpha-glucose.. Glucosidase involved in the degradation of cellulosic biomass. Active on lichenan. The chain is Probable glucan 1,3-beta-glucosidase D (exgD) from Aspergillus fumigatus (strain CBS 144.89 / FGSC A1163 / CEA10) (Neosartorya fumigata).